A 100-amino-acid chain; its full sequence is EKC/KEOPS complex subunit GON7 (100 aa).

M1 is subject to N-acetylmethionine. The segment at 50–100 (SPVQGEAQDRVAAAPEEALDGDDEDDAEDENNIDNRTNSDGPTAKRPKPPS) is disordered. Over residues 66–81 (EALDGDDEDDAEDENN) the composition is skewed to acidic residues.

In terms of assembly, component of the EKC/KEOPS complex composed of at least GON7, TP53RK, TPRKB, OSGEP and LAGE3; the whole complex dimerizes.

The protein localises to the nucleus. Functionally, component of the EKC/KEOPS complex that is required for the formation of a threonylcarbamoyl group on adenosine at position 37 (t(6)A37) in tRNAs that read codons beginning with adenine. The complex is probably involved in the transfer of the threonylcarbamoyl moiety of threonylcarbamoyl-AMP (TC-AMP) to the N6 group of A37. GON7 plays a supporting role to the catalytic subunit OSGEP in the complex. In Sus scrofa (Pig), this protein is EKC/KEOPS complex subunit GON7.